The primary structure comprises 826 residues: Arf-GAP with ANK repeat and PH domain-containing protein cnt-1 (826 aa).

The PH domain occupies 275–373; it reads DVMMEGYLYK…WMRALQRTIL (99 aa). The 126-residue stretch at 447 to 572 folds into the Arf-GAP domain; the sequence is TTAFEQVRRV…RFAVAEDTRA (126 aa). The segment at 462–485 adopts a C4-type zinc-finger fold; it reads CADCGSPAPKWVSINLGVVLCIEC. The tract at residues 570-604 is disordered; sequence TRARSSATNRQEHLKHKTSIGGNSSSNGVNRSSSY. Residues 588–603 show a composition bias toward low complexity; the sequence is SIGGNSSSNGVNRSSS. ANK repeat units follow at residues 690 to 719, 723 to 752, and 756 to 789; these read NGTT…KINM, KLNT…DSNL, and DSKT…NADF.

In terms of assembly, interacts (via C-terminal ankyrin repeat) with rab-10 (GTP-bound form); the interaction is required for cnt-1 recruitment to endosomes. Interacts (via C-terminal ankyrin repeat) with rab-8 (GTP-bound form) and rab-35 (GTP-bound form). In terms of processing, cleaved by caspase ced-3 after Asp-382 and Asp-609. Cleavage at Asp-382 is required for subsequent cleavage at Asp-609.

It localises to the cytoplasm. The protein localises to the recycling endosome membrane. The protein resides in the basolateral cell membrane. Its subcellular location is the apical cell membrane. It is found in the cell membrane. Functionally, GTPase-activating protein for the ADP ribosylation factor family. Regulates endosome recycling downstream of rab-10 and upstream of arf-6. Promotes apoptosis during embryonic development. Produced by caspase ced-3-mediated cleavage, and translocates to the plasma membrane where it prevents the activation of the prosurvival Akt-1/2 and sgk-1 signaling pathway by competing with Akt-1/2 for the binding to PtdIns(3,4,5)P3. In Caenorhabditis elegans, this protein is Arf-GAP with ANK repeat and PH domain-containing protein cnt-1.